Here is a 152-residue protein sequence, read N- to C-terminus: MSTTPIVSGVTSQNNSSENVSNNARSLTLKERASKILSSTAFKVGLAVVGIFLVILSIVLLFILPATAASNPIYLAIPAILGCVNICIGILSMNKGSCSEAKWKLCKNVLKTSEDILDDGELNNSNKIFTDDNLSRVEDIVITLSSRRNSVA.

The span at 1-11 shows a compositional bias: polar residues; the sequence is MSTTPIVSGVT. Residues 1–21 form a disordered region; it reads MSTTPIVSGVTSQNNSSENVS. Positions 12–21 are enriched in low complexity; it reads SQNNSSENVS. A run of 2 helical transmembrane segments spans residues 44 to 64 and 73 to 93; these read VGLA…LFIL and IYLA…ILSM.

The protein localises to the membrane. The chain is Sulfur-rich protein (srp) from Chlamydia muridarum (strain MoPn / Nigg).